Reading from the N-terminus, the 498-residue chain is Aspartyl/glutamyl-tRNA(Asn/Gln) amidotransferase subunit B (498 aa).

It belongs to the GatB/GatE family. GatB subfamily. In terms of assembly, heterotrimer of A, B and C subunits.

The catalysed reaction is L-glutamyl-tRNA(Gln) + L-glutamine + ATP + H2O = L-glutaminyl-tRNA(Gln) + L-glutamate + ADP + phosphate + H(+). The enzyme catalyses L-aspartyl-tRNA(Asn) + L-glutamine + ATP + H2O = L-asparaginyl-tRNA(Asn) + L-glutamate + ADP + phosphate + 2 H(+). Allows the formation of correctly charged Asn-tRNA(Asn) or Gln-tRNA(Gln) through the transamidation of misacylated Asp-tRNA(Asn) or Glu-tRNA(Gln) in organisms which lack either or both of asparaginyl-tRNA or glutaminyl-tRNA synthetases. The reaction takes place in the presence of glutamine and ATP through an activated phospho-Asp-tRNA(Asn) or phospho-Glu-tRNA(Gln). This is Aspartyl/glutamyl-tRNA(Asn/Gln) amidotransferase subunit B from Caulobacter vibrioides (strain ATCC 19089 / CIP 103742 / CB 15) (Caulobacter crescentus).